The chain runs to 296 residues: uncharacterized protein (296 aa).

It to Synechocystis PCC 6803 sll0787 and M.jannaschii MJ0640.

This is an uncharacterized protein from Methanocaldococcus jannaschii (strain ATCC 43067 / DSM 2661 / JAL-1 / JCM 10045 / NBRC 100440) (Methanococcus jannaschii).